A 131-amino-acid polypeptide reads, in one-letter code: Small ribosomal subunit protein bS6 (131 aa).

The tract at residues 98–131 (EASPMVKAKDERRERREDFANETADDSEAGDSEE) is disordered. A compositionally biased stretch (basic and acidic residues) spans 104–116 (KAKDERRERREDF). The span at 120–131 (TADDSEAGDSEE) shows a compositional bias: acidic residues.

This sequence belongs to the bacterial ribosomal protein bS6 family.

Functionally, binds together with bS18 to 16S ribosomal RNA. The sequence is that of Small ribosomal subunit protein bS6 from Klebsiella pneumoniae subsp. pneumoniae (strain ATCC 700721 / MGH 78578).